The following is a 386-amino-acid chain: Formate-dependent phosphoribosylglycinamide formyltransferase (386 aa).

Residues 15-16 and E75 each bind N(1)-(5-phospho-beta-D-ribosyl)glycinamide; that span reads EL. ATP contacts are provided by residues R107, K148, 153 to 158, 188 to 191, and E196; these read SSGKGQ and EQFI. Positions 112–301 constitute an ATP-grasp domain; sequence ALAAQQLNLQ…EFELHLRAIV (190 aa). Mg(2+) is bound by residues E260 and E272. N(1)-(5-phospho-beta-D-ribosyl)glycinamide-binding positions include D279, K349, and 356–357; that span reads RR.

This sequence belongs to the PurK/PurT family. Homodimer.

The enzyme catalyses N(1)-(5-phospho-beta-D-ribosyl)glycinamide + formate + ATP = N(2)-formyl-N(1)-(5-phospho-beta-D-ribosyl)glycinamide + ADP + phosphate + H(+). Its pathway is purine metabolism; IMP biosynthesis via de novo pathway; N(2)-formyl-N(1)-(5-phospho-D-ribosyl)glycinamide from N(1)-(5-phospho-D-ribosyl)glycinamide (formate route): step 1/1. Involved in the de novo purine biosynthesis. Catalyzes the transfer of formate to 5-phospho-ribosyl-glycinamide (GAR), producing 5-phospho-ribosyl-N-formylglycinamide (FGAR). Formate is provided by PurU via hydrolysis of 10-formyl-tetrahydrofolate. The polypeptide is Formate-dependent phosphoribosylglycinamide formyltransferase (Francisella tularensis subsp. tularensis (strain SCHU S4 / Schu 4)).